The sequence spans 371 residues: Peptidyl-prolyl cis-trans isomerase CPR6 (371 aa).

Residues 7–174 enclose the PPIase cyclophilin-type domain; it reads FFDISIGGKP…RDVKIDDCGV (168 aa). 3 TPR repeats span residues 219–252, 270–303, and 308–341; these read IETV…LKEY, VSIP…EAAD, and AKAL…QPND.

This sequence belongs to the cyclophilin-type PPIase family. PPIase D subfamily. Interacts with RPD3.

Its subcellular location is the cytoplasm. The enzyme catalyses [protein]-peptidylproline (omega=180) = [protein]-peptidylproline (omega=0). In terms of biological role, PPIases accelerate the folding of proteins. It catalyzes the cis-trans isomerization of proline imidic peptide bonds in oligopeptides. This Saccharomyces cerevisiae (strain ATCC 204508 / S288c) (Baker's yeast) protein is Peptidyl-prolyl cis-trans isomerase CPR6 (CPR6).